The chain runs to 467 residues: ATP synthase subunit beta (467 aa).

Residue 150–157 participates in ATP binding; that stretch reads GGAGVGKT.

Belongs to the ATPase alpha/beta chains family. As to quaternary structure, F-type ATPases have 2 components, CF(1) - the catalytic core - and CF(0) - the membrane proton channel. CF(1) has five subunits: alpha(3), beta(3), gamma(1), delta(1), epsilon(1). CF(0) has three main subunits: a(1), b(2) and c(9-12). The alpha and beta chains form an alternating ring which encloses part of the gamma chain. CF(1) is attached to CF(0) by a central stalk formed by the gamma and epsilon chains, while a peripheral stalk is formed by the delta and b chains.

It localises to the cell inner membrane. The catalysed reaction is ATP + H2O + 4 H(+)(in) = ADP + phosphate + 5 H(+)(out). Its function is as follows. Produces ATP from ADP in the presence of a proton gradient across the membrane. The catalytic sites are hosted primarily by the beta subunits. The polypeptide is ATP synthase subunit beta (Vibrio alginolyticus).